Here is a 584-residue protein sequence, read N- to C-terminus: Protein FAM117B (584 aa).

The disordered stretch occupies residues 1-214 (MSQRVRRNGS…SSSSSIIRRT (214 aa)). Ser10 carries the phosphoserine modification. Residues 53–79 (TRGGGGGGNNGGNGGASGPSGGGGSGG) are compositionally biased toward gly residues. Over residues 80–90 (PRTASRSTSPT) the composition is skewed to low complexity. Ser102 carries the post-translational modification Phosphoserine. A compositionally biased stretch (low complexity) spans 114-132 (TSTRGTSPTRGTAPGARSS). Pro residues predominate over residues 133-142 (PPRPQPPPPL). Residues 145-154 (TVSSPSSSPT) show a composition bias toward polar residues. Positions 204 to 214 (SSSSSSIIRRT) are enriched in low complexity. Ser206, Ser215, Ser216, and Ser268 each carry phosphoserine. Disordered regions lie at residues 227–461 (GHWP…SYMF) and 551–584 (STNTEQERVSRGTSTVLPSASLHAPPEPIEEAEG). Over residues 287-297 (RSKHSSRHHRD) the composition is skewed to basic residues. The residue at position 340 (Ser340) is a Phosphoserine. Positions 350–361 (IIIKETGEKEEQ) are enriched in basic and acidic residues. Polar residues predominate over residues 379–392 (QRSSSTRSIDTQTP). Phosphoserine is present on Ser386. Low complexity predominate over residues 399–412 (SNNSSRSQSVSPTS). Phosphoserine is present on residues Ser444 and Ser452.

The polypeptide is Protein FAM117B (Fam117b) (Mus musculus (Mouse)).